A 101-amino-acid chain; its full sequence is Small ribosomal subunit protein uS14 (101 aa).

A disordered region spans residues Ala44–Val74. Basic and acidic residues predominate over residues Arg61–Pro70.

This sequence belongs to the universal ribosomal protein uS14 family. As to quaternary structure, part of the 30S ribosomal subunit. Contacts proteins S3 and S10.

Binds 16S rRNA, required for the assembly of 30S particles and may also be responsible for determining the conformation of the 16S rRNA at the A site. This is Small ribosomal subunit protein uS14 from Cutibacterium acnes (strain DSM 16379 / KPA171202) (Propionibacterium acnes).